The chain runs to 1620 residues: DNA (cytosine-5)-methyltransferase 1 (1620 aa).

The segment at 1-21 (MPARTAPARVPALASPAGSLP) is disordered. An interaction with DMAP1 region spans residues 1 to 120 (MPARTAPARV…SRPTWRAEMA (120 aa)). Residues 1-145 (MPARTAPARV…RRSKSDSDTL (145 aa)) form an interaction with DNMT3A region. Interaction with the PRC2/EED-EZH2 complex regions lie at residues 1–343 (MPAR…SERK) and 305–609 (APET…RVMG). Ser15 carries the phosphoserine modification. One can recognise a DMAP1-binding domain in the interval 16–109 (PAGSLPDHVR…TQKANGCPAN (94 aa)). Lys70 bears the N6,N6-dimethyllysine; by EHMT2 mark. Positions 96-369 (THTLTQKANG…PECGQHLDDP (274 aa)) are disordered. Residues 126–137 (PRSRPKPRGPRR) show a composition bias toward basic residues. At Ser138 the chain carries Phosphoserine. Residue Lys139 is modified to N6-methyllysine; by SETD7. Ser140 is subject to Phosphoserine. Residues 144-155 (TLSVETSPSSVA) show a composition bias toward polar residues. A Phosphoserine; by CK1 modification is found at Ser146. Residues 147 to 217 (VETSPSSVAT…SGAAAAVEKL (71 aa)) form an interaction with DNMT3B region. Ser150 and Ser152 each carry phosphoserine. The tract at residues 161–172 (RQTTITAHFTKG) is interaction with PCNA. A Phosphothreonine modification is found at Thr164. At Lys171 the chain carries N6-acetyllysine. Residues 175–202 (KRKPKEESEEGNSAESAAEERDQDKKRR) carry the Nuclear localization signal motif. A compositionally biased stretch (basic and acidic residues) spans 192–205 (AEERDQDKKRRVVD). Position 240 is a phosphoserine (Ser240). Basic and acidic residues-rich tracts occupy residues 246–267 (RELSLRRKSKEDPDREARPETH) and 286–300 (QPRDPAAKRRPKEAE). N6-acetyllysine; alternate is present on Lys255. Lys255 participates in a covalent cross-link: Glycyl lysine isopeptide (Lys-Gly) (interchain with G-Cter in SUMO2); alternate. The span at 308–317 (TPEDRDEDER) shows a compositional bias: acidic residues. The segment at 328–556 (KLESHTVPVQ…NVNRFTEDSL (229 aa)) is DNA replication foci-targeting sequence. Zn(2+) is bound by residues Cys359 and Cys362. Lys372 is subject to N6-acetyllysine. Cys420 and His424 together coordinate Zn(2+). Residues Ser515 and Ser555 each carry the phosphoserine modification. The segment at 649–695 (NAMKRRRCGVCEVCQQPECGKCKACKDMVKFGGTGRSKQACLKRRCP) adopts a CXXC-type zinc-finger fold. The Zn(2+) site is built by Cys656, Cys659, Cys662, Cys667, Cys670, Cys673, Cys689, and Cys694. The segment at 696–757 (NLAVKEADDD…TYYQKVSIDE (62 aa)) is autoinhibitory linker. Residues 696-813 (NLAVKEADDD…TDTVLGATSD (118 aa)) form an interaction with HDAC1 region. The span at 702–713 (ADDDEEADDDVS) shows a compositional bias: acidic residues. Residues 702–732 (ADDDEEADDDVSEMPSPKKLHQGKKKKQNKD) form a disordered region. Phosphoserine occurs at positions 713 and 717. Basic residues predominate over residues 719-730 (KKLHQGKKKKQN). Ser735 is modified (phosphoserine). Residue Lys752 is modified to N6-acetyllysine. Residues 758-884 (EMLEVGDCVS…QEYARFESPP (127 aa)) form the BAH 1 domain. At Ser882 the chain carries Phosphoserine. Lys895, Lys961, Lys965, and Lys979 each carry N6-acetyllysine. The 128-residue stretch at 976–1103 (HYRKYSDYIK…SKTKNFEDPP (128 aa)) folds into the BAH 2 domain. A disordered region spans residues 1097–1136 (KNFEDPPNHARSPGNKGKGKGKGKGKGKHQVSEPKEPEAA). 6 repeat units span residues 1112–1113 (KG), 1114–1115 (KG), 1116–1117 (KG), 1118–1119 (KG), 1120–1121 (KG), and 1122–1123 (KG). Residues 1112-1125 (KGKGKGKGKGKGKH) are 7 X 2 AA tandem repeats of K-G. Over residues 1113-1125 (GKGKGKGKGKGKH) the composition is skewed to basic residues. Lys1114, Lys1116, Lys1118, Lys1120, Lys1122, and Lys1124 each carry N6-acetyllysine. Residues 1124-1125 (KH) form a 7; approximate repeat. Positions 1124–1620 (KHQVSEPKEP…KAKEEAATKD (497 aa)) are interaction with the PRC2/EED-EZH2 complex. A compositionally biased stretch (basic and acidic residues) spans 1126-1135 (QVSEPKEPEA). The SAM-dependent MTase C5-type domain occupies 1142–1601 (LRTLDVFSGC…LEIKLCLLSS (460 aa)). The tract at residues 1142-1620 (LRTLDVFSGC…KAKEEAATKD (479 aa)) is catalytic. Residues Ser1149, 1153-1154 (GL), 1171-1172 (EM), and 1193-1194 (DC) each bind S-adenosyl-L-methionine. Residue Cys1229 is part of the active site. N6-acetyllysine is present on residues Lys1352 and Lys1418. Val1582 is an S-adenosyl-L-methionine binding site. Residue Lys1611 forms a Glycyl lysine isopeptide (Lys-Gly) (interchain with G-Cter in SUMO2) linkage.

The protein belongs to the class I-like SAM-binding methyltransferase superfamily. C5-methyltransferase family. As to quaternary structure, homodimer. Forms a stable complex with E2F1, BB1 and HDAC1. Forms a complex with DMAP1 and HDAC2, with direct interaction. Interacts with the PRC2/EED-EZH2 complex. Probably part of a corepressor complex containing ZNF304, TRIM28, SETDB1 and DNMT1. Interacts with UHRF1; promoting its recruitment to hemimethylated DNA. Interacts with USP7, promoting its deubiquitination. Interacts with BAZ2A/TIP5. Interacts with PCNA. Interacts with MBD2 and MBD3. Interacts with DNMT3A and DNMT3B. Interacts with UBC9. Interacts with HDAC1. Interacts with CSNK1D. Interacts with SIRT7. Interacts with ZNF263; recruited to the SIX3 promoter along with other proteins involved in chromatin modification and transcriptional corepression where it contributes to transcriptional repression. Interacts with L3MBTL3 and DCAF5; the interaction requires DNMT1 methylation at Lys-139 and is necessary to target DNMT1 for ubiquitination by the CRL4-DCAF5 E3 ubiquitin ligase complex and proteasomal degradation. Interacts with PHF20L1; the interaction requires DNMT1 methylation at Lys-139 and protects DNMT1 from ubiquitination and proteasomal degradation. Post-translationally, sumoylated; sumoylation increases activity. In terms of processing, phosphorylation at Ser-146 by CK1 reduces DNA-binding activity. Acetylation on multiple lysines, mainly by KAT2B/PCAF, regulates cell cycle G(2)/M transition. Deacetylation of Lys-1352 and Lys-1418 by SIRT1 increases methyltransferase activity. Post-translationally, phosphorylation of Ser-152 by CDKs is important for enzymatic activity and protein stability. Phosphorylation of Ser-140 by AKT1 prevents methylation by SETD7 thereby increasing DNMT1 stability. In terms of processing, methylation at Lys-139 by SETD7 is necessary for the regulation of DNMT1 proteasomal degradation. Ubiquitinated by UHRF1; interaction with USP7 counteracts ubiquitination by UHRF1 by promoting deubiquitination and preventing degradation by the proteasome. Isoform 1 is expressed in embryonic stem cells and in somatic tissues. Isoform 2 is expressed in oocytes, preimplantation embryos, testis and in skeletal muscle during myogenesis.

The protein resides in the nucleus. It localises to the cytoplasm. The enzyme catalyses a 2'-deoxycytidine in DNA + S-adenosyl-L-methionine = a 5-methyl-2'-deoxycytidine in DNA + S-adenosyl-L-homocysteine + H(+). Allosterically regulated. The binding of 5-methylcytosine-containing DNA to the N-terminal parts of DNMT1 causes an allosteric activation of the catalytic domain by a direct interaction of its Zn-binding domain with the catalytic domain. Its function is as follows. Methylates CpG residues. Preferentially methylates hemimethylated DNA. Associates with DNA replication sites in S phase maintaining the methylation pattern in the newly synthesized strand, that is essential for epigenetic inheritance. Associates with chromatin during G2 and M phases to maintain DNA methylation independently of replication. It is responsible for maintaining methylation patterns established in development. DNA methylation is coordinated with methylation of histones. Mediates transcriptional repression by direct binding to HDAC2. In association with DNMT3B and via the recruitment of CTCFL/BORIS, involved in activation of BAG1 gene expression by modulating dimethylation of promoter histone H3 at H3K4 and H3K9. Probably forms a corepressor complex required for activated KRAS-mediated promoter hypermethylation and transcriptional silencing of tumor suppressor genes (TSGs) or other tumor-related genes in colorectal cancer (CRC) cells. Also required to maintain a transcriptionally repressive state of genes in undifferentiated embryonic stem cells (ESCs). Associates at promoter regions of tumor suppressor genes (TSGs) leading to their gene silencing. Promotes tumor growth. The polypeptide is DNA (cytosine-5)-methyltransferase 1 (Dnmt1) (Mus musculus (Mouse)).